The chain runs to 340 residues: Ketol-acid reductoisomerase (NADP(+)) (340 aa).

The 182-residue stretch at 1–182 (MRVYYDRDCD…GGGRSGIIET (182 aa)) folds into the KARI N-terminal Rossmann domain. NADP(+)-binding positions include 24–27 (YGSQ), R48, S51, S53, and 83–86 (DELQ). H108 is a catalytic residue. G134 contacts NADP(+). The KARI C-terminal knotted domain occupies 183-329 (NFREECETDL…ETLRGMMPWI (147 aa)). The Mg(2+) site is built by D191, E195, E227, and E231. S252 is a binding site for substrate.

This sequence belongs to the ketol-acid reductoisomerase family. Requires Mg(2+) as cofactor.

The enzyme catalyses (2R)-2,3-dihydroxy-3-methylbutanoate + NADP(+) = (2S)-2-acetolactate + NADPH + H(+). It catalyses the reaction (2R,3R)-2,3-dihydroxy-3-methylpentanoate + NADP(+) = (S)-2-ethyl-2-hydroxy-3-oxobutanoate + NADPH + H(+). It participates in amino-acid biosynthesis; L-isoleucine biosynthesis; L-isoleucine from 2-oxobutanoate: step 2/4. Its pathway is amino-acid biosynthesis; L-valine biosynthesis; L-valine from pyruvate: step 2/4. In terms of biological role, involved in the biosynthesis of branched-chain amino acids (BCAA). Catalyzes an alkyl-migration followed by a ketol-acid reduction of (S)-2-acetolactate (S2AL) to yield (R)-2,3-dihydroxy-isovalerate. In the isomerase reaction, S2AL is rearranged via a Mg-dependent methyl migration to produce 3-hydroxy-3-methyl-2-ketobutyrate (HMKB). In the reductase reaction, this 2-ketoacid undergoes a metal-dependent reduction by NADPH to yield (R)-2,3-dihydroxy-isovalerate. The chain is Ketol-acid reductoisomerase (NADP(+)) from Jannaschia sp. (strain CCS1).